We begin with the raw amino-acid sequence, 1511 residues long: MSNNEKVLSPIEIKELERPQDFSAFQLKLASPEKILSWSCGEVKKPETINYRTLKPERDGLFCAKIFGPVKDYECLCGKYKKMRYKGVVCEKCGVEVTSSKVRRHRMGHIELVSPVAHIWMVSSLPTRIGTLLGVKLKDLERVLYYEAYIVSNPGEAYYDNEKTKKVEKYDILNEEQYRTISDLFEHTGFEANMGGEIVRDLLAGLDLFELLTLLKEEMETTKSEAKRKTIIKRLKVVENFLNSGNRPEWMMLTQLPVLPPDLRPLVSLDGGKFAVSDVNDLYRRVINRNNRLKRLTELDAPEIIIRNEKRMLQEAVDALFDNGKTANAVKGANKRPLKSLSEIIKGKQGRFRQNLLGKRVDFSGRSVIVVGPSLNMDQCGIPKKMALELFKPHLMAKLEEKGYATTLKAAKRLIENESNEVWECLNEIVDEYPILLNRAPTLHKLSIQAFHPVLIDGKAIRLHPLVCAAFNADFDGDQMAVHVPLSQEAVAEAKILMMSSMNILLPASGRAIAVPSQDMILGIYYLSLVKEGVKGEHKLFTDVNEVKIALDMGQIDLHAKIRTRIGDRIIQTTVGRLIIHEILPSFVPANLWNKILKKKDIGILVDYIYKEAGYEVTPRFLDDLKNLGFKYATIAGISISIDDIRVPENKIMHISKSKKDVIEVQKQFSQGLLTEQERYNKIIDIWTEVNNKLASEMMELVKGDKNGFNSIYMMADSGARGSAAQIRQLSGMRGLMAKPDGSIIETPIISNFREGLNVLEYFISTHGARKGLADTALKTANAGYLTRKLIDVSQNVRITIEDCGTHEGIEITDITSGNELIESLEERITGRVIAEDIIDPISNEILFAEGTLITEEDAKVVTEAEVKSVVIRTPLTCKVENGLCSKCYGLNLGEQRKAKPGEAVGVVAAQSIGEPGTQLTLRTFHVGGTASATQTERELKADKEGFIRYYNIKKYVTTDGKIIVANRRNAGLLLVEPKINAPFKGKVTVETVHEEIILTIANSTEEKKYFLRKNDVAKANELAGISGKIEGKLYLPYKDGEEVNLNESIVEIIKDGWNVPNRIPFASELKVEDGAPVTSKIITGAKGIVKYYKLTGDYLERRHDIKAGDIITEKGLFAVIADTEDREALRHYISRGSCIALNDNTEVEKDTVISAPAKNEQVVIAEWDPYANPTIAEKAGVISFEDVIPGVTVSEQFDELTGTSKLVINEYIPSGYKPTVILTTDDNEIIRYSLDPKISLNVSEGKRVEVADIIGKTPKATQKSKDITGGLPRVSELFEARRPKNIAILASFDGVVSFGKGLRNKQKILITDSTGNSVEYLVEKSKQVLVHEGEFVHAGEALTDGQISPHDILRILGEKALHYFIVSEVQQVYRSQGVNIADKHIEVITSQMLRQVSILDGGDTKFIVGDMISKKKFKLENEKIIKLGGNPAIAEPLLLGITRAAVTSDSIISAASFQETTKVLTEAAISAKMDMLEDLKENVVIGRTIPVGTGLYKDQKVKFSEQEISK.

C75, C77, C90, and C93 together coordinate Zn(2+). The Mg(2+) site is built by D474, D476, and D478. The Zn(2+) site is built by C804, C878, C885, and C888.

Belongs to the RNA polymerase beta' chain family. In terms of assembly, the RNAP catalytic core consists of 2 alpha, 1 beta, 1 beta' and 1 omega subunit. When a sigma factor is associated with the core the holoenzyme is formed, which can initiate transcription. Mg(2+) serves as cofactor. Requires Zn(2+) as cofactor.

It carries out the reaction RNA(n) + a ribonucleoside 5'-triphosphate = RNA(n+1) + diphosphate. In terms of biological role, DNA-dependent RNA polymerase catalyzes the transcription of DNA into RNA using the four ribonucleoside triphosphates as substrates. The protein is DNA-directed RNA polymerase subunit beta' of Aliarcobacter butzleri (strain RM4018) (Arcobacter butzleri).